Here is a 133-residue protein sequence, read N- to C-terminus: MINSRLAVAIHILSLISMDEKTSSEIIADSVNTNPVVVRRMISLLKKADILTSRAGVPGASLKKDPADISLLEVYRAVQKQEELFAVHENPNPKCPVGKKIQNALDETFESVQRAMENELASKSLKDVMNHLF.

The HTH rrf2-type domain occupies 1–130; that stretch reads MINSRLAVAI…ASKSLKDVMN (130 aa). Positions 24–47 form a DNA-binding region, H-T-H motif; that stretch reads SEIIADSVNTNPVVVRRMISLLKK.

The polypeptide is Putative HTH-type transcriptional regulator YwnA (ywnA) (Bacillus subtilis (strain 168)).